A 510-amino-acid chain; its full sequence is Fumarate hydratase, mitochondrial (510 aa).

A mitochondrion-targeting transit peptide spans 1–44 (MYRALRLLARSRPLVRAPAAALASAPGLGGAAVPSFWPPNAARM). N6-acetyllysine; alternate occurs at positions 61, 66, and 80. N6-succinyllysine; alternate occurs at positions 61, 66, and 80. Phosphothreonine occurs at positions 85 and 90. The residue at position 94 (lysine 94) is an N6-acetyllysine. N6-acetyllysine; alternate is present on residues lysine 115 and lysine 122. N6-succinyllysine; alternate is present on residues lysine 115 and lysine 122. Substrate-binding positions include 145–147 (SGT), 176–179 (HPND), and 186–188 (SSN). Position 213 is an N6-acetyllysine (lysine 213). Lysine 223 is modified (N6-acetyllysine; alternate). N6-succinyllysine; alternate is present on lysine 223. Threonine 234 is a binding site for substrate. Residue histidine 235 is the Proton donor/acceptor of the active site. Residue threonine 236 is modified to Phosphothreonine; by PRKDC. An N6-acetyllysine modification is found at lysine 256. Lysine 292 bears the N6-acetyllysine; alternate mark. Lysine 292 carries the post-translational modification N6-succinyllysine; alternate. Serine 365 is a catalytic residue. Substrate-binding positions include serine 366 and 371 to 373 (KVN). Phosphoserine is present on serine 366. An N6-succinyllysine mark is found at lysine 467 and lysine 473. Residue lysine 502 is modified to N6-acetyllysine.

It belongs to the class-II fumarase/aspartase family. Fumarase subfamily. Homotetramer. Interacts with H2AZ1. Phosphorylation at Thr-236 by PRKDC in response to DNA damage promotes translocation to the nucleus and recruitment to DNA double-strand breaks (DSBs). In terms of tissue distribution, expressed in red blood cells; underexpressed in red blood cells (cytoplasm) of patients with hereditary non-spherocytic hemolytic anemia of unknown etiology.

Its subcellular location is the mitochondrion. The protein resides in the cytoplasm. It is found in the cytosol. The protein localises to the nucleus. It localises to the chromosome. The enzyme catalyses (S)-malate = fumarate + H2O. It functions in the pathway carbohydrate metabolism; tricarboxylic acid cycle; (S)-malate from fumarate: step 1/1. Its function is as follows. Catalyzes the reversible stereospecific interconversion of fumarate to L-malate. Experiments in other species have demonstrated that specific isoforms of this protein act in defined pathways and favor one direction over the other. Functionally, catalyzes the hydration of fumarate to L-malate in the tricarboxylic acid (TCA) cycle to facilitate a transition step in the production of energy in the form of NADH. In terms of biological role, catalyzes the dehydration of L-malate to fumarate. Fumarate metabolism in the cytosol plays a role during urea cycle and arginine metabolism; fumarate being a by-product of the urea cycle and amino-acid catabolism. Also plays a role in DNA repair by promoting non-homologous end-joining (NHEJ). In response to DNA damage and phosphorylation by PRKDC, translocates to the nucleus and accumulates at DNA double-strand breaks (DSBs): acts by catalyzing formation of fumarate, an inhibitor of KDM2B histone demethylase activity, resulting in enhanced dimethylation of histone H3 'Lys-36' (H3K36me2). The protein is Fumarate hydratase, mitochondrial of Homo sapiens (Human).